Here is a 331-residue protein sequence, read N- to C-terminus: Protein Brevis radix-like 1 (331 aa).

Residues 1–111 are disordered; that stretch reads MFTCINCTKM…HQSGRPDSRF (111 aa). Composition is skewed to polar residues over residues 25–41 and 48–66; these read STTPNTKEAVKSLTTQI and FSGSHKQSKPTPGSSSSNL. In terms of domain architecture, BRX 1 spans 137–192; the sequence is KEWMAQVEPGVHITFVSLPSGGNDLKRIRFSREVFDKWQAQRWWGENYDRIVELYN. 2 disordered regions span residues 201–246 and 258–279; these read LQTP…VPHH and TTSSRDEPPSMSNASEMQGEWV. Over residues 221 to 235 the composition is skewed to basic and acidic residues; that stretch reads DSARESRDWTQRDNN. The BRX 2 domain occupies 276 to 331; it reads GEWVEEDEPGVYITIRQLPDGTRELRRVRFSRERFGEVHAKTWWEQNRDRIQTQYL.

The protein belongs to the BRX family. In terms of assembly, heterodimer with BRXL1. Expressed in roots.

It is found in the nucleus. Its function is as follows. May act as a regulator of cell proliferation and elongation in the root. The polypeptide is Protein Brevis radix-like 1 (BRXL1) (Arabidopsis thaliana (Mouse-ear cress)).